The following is a 380-amino-acid chain: Tryptophan 2,3-dioxygenase (380 aa).

Substrate contacts are provided by residues 57-61 (FIITH) and arginine 128. Residue histidine 313 coordinates heme. Residue threonine 328 coordinates substrate.

Belongs to the tryptophan 2,3-dioxygenase family. In terms of assembly, homotetramer. Dimer of dimers. It depends on heme as a cofactor.

The catalysed reaction is L-tryptophan + O2 = N-formyl-L-kynurenine. Its pathway is amino-acid degradation; L-tryptophan degradation via kynurenine pathway; L-kynurenine from L-tryptophan: step 1/2. The protein operates within pigment biosynthesis; ommochrome biosynthesis. Functionally, heme-dependent dioxygenase that catalyzes the oxidative cleavage of the L-tryptophan (L-Trp) pyrrole ring and converts L-tryptophan to N-formyl-L-kynurenine. Catalyzes the oxidative cleavage of the indole moiety. The sequence is that of Tryptophan 2,3-dioxygenase from Drosophila ananassae (Fruit fly).